The sequence spans 135 residues: Methylglyoxal synthase (135 aa).

Positions methionine 1 to phenylalanine 135 constitute an MGS-like domain. Substrate-binding positions include histidine 10, lysine 14, threonine 36 to threonine 39, and serine 56 to glycine 57. The Proton donor/acceptor role is filled by aspartate 62. Position 89 (histidine 89) interacts with substrate.

This sequence belongs to the methylglyoxal synthase family.

It carries out the reaction dihydroxyacetone phosphate = methylglyoxal + phosphate. Functionally, catalyzes the formation of methylglyoxal from dihydroxyacetone phosphate. This chain is Methylglyoxal synthase, found in Pseudoalteromonas atlantica (strain T6c / ATCC BAA-1087).